The following is a 593-amino-acid chain: A-type ATP synthase subunit A (593 aa).

236 to 243 (GPFGSGKT) provides a ligand contact to ATP.

It belongs to the ATPase alpha/beta chains family. As to quaternary structure, has multiple subunits with at least A(3), B(3), C, D, E, F, H, I and proteolipid K(x).

The protein resides in the cell membrane. It carries out the reaction ATP + H2O + 4 H(+)(in) = ADP + phosphate + 5 H(+)(out). Its function is as follows. Component of the A-type ATP synthase that produces ATP from ADP in the presence of a proton gradient across the membrane. The A chain is the catalytic subunit. This chain is A-type ATP synthase subunit A, found in Pyrobaculum islandicum (strain DSM 4184 / JCM 9189 / GEO3).